The sequence spans 70 residues: Large ribosomal subunit protein bL31 (70 aa).

Cysteine 16, cysteine 18, cysteine 37, and cysteine 40 together coordinate Zn(2+).

Belongs to the bacterial ribosomal protein bL31 family. Type A subfamily. As to quaternary structure, part of the 50S ribosomal subunit. It depends on Zn(2+) as a cofactor.

Binds the 23S rRNA. This is Large ribosomal subunit protein bL31 from Enterobacter sp. (strain 638).